Consider the following 42-residue polypeptide: Putative protein RNF216-like (42 aa).

This chain is Putative protein RNF216-like (RNF216P1), found in Homo sapiens (Human).